The primary structure comprises 600 residues: NADH-quinone oxidoreductase subunit C/D (600 aa).

The segment at 1 to 190 is NADH dehydrogenase I subunit C; the sequence is MVNNMTDLTA…DPFELTKAKQ (190 aa). Residues 214 to 600 form an NADH dehydrogenase I subunit D region; it reads DFMFLNLGPN…IDFVMSDVDR (387 aa).

In the N-terminal section; belongs to the complex I 30 kDa subunit family. It in the C-terminal section; belongs to the complex I 49 kDa subunit family. As to quaternary structure, NDH-1 is composed of 13 different subunits. Subunits NuoB, CD, E, F, and G constitute the peripheral sector of the complex.

The protein localises to the cell inner membrane. It catalyses the reaction a quinone + NADH + 5 H(+)(in) = a quinol + NAD(+) + 4 H(+)(out). In terms of biological role, NDH-1 shuttles electrons from NADH, via FMN and iron-sulfur (Fe-S) centers, to quinones in the respiratory chain. The immediate electron acceptor for the enzyme in this species is believed to be ubiquinone. Couples the redox reaction to proton translocation (for every two electrons transferred, four hydrogen ions are translocated across the cytoplasmic membrane), and thus conserves the redox energy in a proton gradient. In Citrobacter koseri (strain ATCC BAA-895 / CDC 4225-83 / SGSC4696), this protein is NADH-quinone oxidoreductase subunit C/D.